A 469-amino-acid polypeptide reads, in one-letter code: GDP-fucose protein O-fucosyltransferase 3 (469 aa).

At 1 to 9 (MVNRIWEKR) the chain is on the cytoplasmic side. A helical; Signal-anchor for type II membrane protein membrane pass occupies residues 10–30 (FWISCFFIIFLFILVIFQVMV). Over 31–469 (ELGRFEKKET…EFWNLVFKFW (439 aa)) the chain is Lumenal. 4 N-linked (GlcNAc...) asparagine glycosylation sites follow: N100, N158, N308, and N333. A disulfide bond links C379 and C382. An N-linked (GlcNAc...) asparagine glycan is attached at N455.

It belongs to the glycosyltransferase 10 family.

It is found in the endoplasmic reticulum membrane. The enzyme catalyses L-threonyl-[protein] + GDP-beta-L-fucose = 3-O-(alpha-L-fucosyl)-L-threonyl-[protein] + GDP + H(+). The catalysed reaction is L-seryl-[protein] + GDP-beta-L-fucose = 3-O-(alpha-L-fucosyl)-L-seryl-[protein] + GDP + H(+). It functions in the pathway protein modification; protein glycosylation. In terms of biological role, protein O-fucosyltransferase that specifically catalyzes O-fucosylation of serine or threonine residues in EMI domains of target proteins. Attaches fucose through an O-glycosidic linkage. O-fucosylation of EMI domain-containing proteins may be required for facilitating protein folding and secretion. The sequence is that of GDP-fucose protein O-fucosyltransferase 3 (fut10) from Xenopus laevis (African clawed frog).